The sequence spans 263 residues: Glucosamine-6-phosphate deaminase (263 aa).

Catalysis depends on aspartate 72, which acts as the Proton acceptor; for enolization step. Aspartate 141 serves as the catalytic For ring-opening step. Histidine 143 functions as the Proton acceptor; for ring-opening step in the catalytic mechanism. The For ring-opening step role is filled by glutamate 148.

Belongs to the glucosamine/galactosamine-6-phosphate isomerase family. NagB subfamily.

The enzyme catalyses alpha-D-glucosamine 6-phosphate + H2O = beta-D-fructose 6-phosphate + NH4(+). The protein operates within amino-sugar metabolism; N-acetylneuraminate degradation; D-fructose 6-phosphate from N-acetylneuraminate: step 5/5. Its activity is regulated as follows. Allosterically activated by N-acetylglucosamine 6-phosphate (GlcNAc6P). Catalyzes the reversible isomerization-deamination of glucosamine 6-phosphate (GlcN6P) to form fructose 6-phosphate (Fru6P) and ammonium ion. This chain is Glucosamine-6-phosphate deaminase, found in Porphyromonas gingivalis (strain ATCC BAA-308 / W83).